The following is a 24-amino-acid chain: U4-ctenitoxin-Co1b (24 aa).

In terms of processing, disulfide bonds are present. As to expression, expressed by the venom gland.

It localises to the secreted. Omega-agatoxins are antagonists of voltage-gated calcium channels (Cav). This chain is U4-ctenitoxin-Co1b, found in Ctenus ornatus (Brazilian spider).